The following is a 127-amino-acid chain: Histone H2B type 1-A (127 aa).

A disordered region spans residues 1–36 (MPEVSSKGATISKKGFKKAVVKTQKKEGKKRKRTRK). P2 is modified (N-acetylproline). 7 positions are modified to N6-acetyllysine; alternate: K7, K13, K14, K17, K18, K22, and K25. 8 positions are modified to N6-crotonyllysine; alternate: K7, K13, K14, K17, K18, K22, K25, and K36. An N6-lactoyllysine; alternate mark is found at K7 and K13. Residue K7 forms a Glycyl lysine isopeptide (Lys-Gly) (interchain with G-Cter in SUMO2); alternate linkage. Residues K17, K18, K22, and K25 each carry the N6-lactoyllysine; alternate modification. Residue K22 forms a Glycyl lysine isopeptide (Lys-Gly) (interchain with G-Cter in SUMO2); alternate linkage. Residue K36 is modified to N6-succinyllysine; alternate. K36 participates in a covalent cross-link: Glycyl lysine isopeptide (Lys-Gly) (interchain with G-Cter in ubiquitin); alternate. The residue at position 38 (S38) is a Phosphoserine. K45 is modified (N6-lactoyllysine; alternate). K48 carries the N6-methyllysine modification. At K59 the chain carries N6,N6-dimethyllysine. R81 bears the Dimethylated arginine mark. S86 is subject to Phosphoserine. K87 is modified (N6-acetyllysine; alternate). The residue at position 87 (K87) is an N6-lactoyllysine; alternate. The residue at position 87 (K87) is an N6,N6,N6-trimethyllysine; alternate. An omega-N-methylarginine mark is found at R88 and R94. N6-lactoyllysine; alternate is present on K110. At K110 the chain carries N6-methyllysine. At T117 the chain carries Phosphothreonine. N6-lactoyllysine; alternate occurs at positions 118 and 122. An N6-succinyllysine; alternate mark is found at K118 and K122. K118 carries the post-translational modification N6-methylated lysine; alternate. K122 participates in a covalent cross-link: Glycyl lysine isopeptide (Lys-Gly) (interchain with G-Cter in ubiquitin); alternate.

The protein belongs to the histone H2B family. The nucleosome is a histone octamer containing two molecules each of H2A, H2B, H3 and H4 assembled in one H3-H4 heterotetramer and two H2A-H2B heterodimers. Post-translationally, monoubiquitination at Lys-36 (H2BK34Ub) by the MSL1/MSL2 dimer is required for histone H3 'Lys-4' (H3K4me) and 'Lys-79' (H3K79me) methylation and transcription activation at specific gene loci, such as HOXA9 and MEIS1 loci. Similarly, monoubiquitination at Lys-122 (H2BK120Ub) by the RNF20/40 complex gives a specific tag for epigenetic transcriptional activation and is also prerequisite for histone H3 'Lys-4' and 'Lys-79' methylation. It also functions cooperatively with the FACT dimer to stimulate elongation by RNA polymerase II. H2BK120Ub also acts as a regulator of mRNA splicing: deubiquitination by USP49 is required for efficient cotranscriptional splicing of a large set of exons. Crotonylation (Kcr) is specifically present in male germ cells and marks testis-specific genes in post-meiotic cells, including X-linked genes that escape sex chromosome inactivation in haploid cells. Crotonylation marks active promoters and enhancers and confers resistance to transcriptional repressors. It is also associated with post-meiotically activated genes on autosomes. In terms of processing, acetylated during spermatogenesis. Acetylated form is most abundant in spermatogonia compared to spermatocytes and round spermatids. Post-translationally, phosphorylated at Thr-117 in spermatogonia, spermatocytes and round spermatids. Methylated at Lys-118 in spermatogonia, spermatocytes and round spermatids. In terms of processing, lactylated in macrophages by EP300/P300 by using lactoyl-CoA directly derived from endogenous or exogenous lactate, leading to stimulates gene transcription. In terms of tissue distribution, mainly expressed in testis, and the corresponding protein is also present in mature sperm (at protein level). Also found in some fat cells.

The protein resides in the nucleus. It localises to the chromosome. Variant histone specifically required to direct the transformation of dissociating nucleosomes to protamine in male germ cells. Entirely replaces classical histone H2B prior nucleosome to protamine transition and probably acts as a nucleosome dissociating factor that creates a more dynamic chromatin, facilitating the large-scale exchange of histones. Core component of nucleosome. Nucleosomes wrap and compact DNA into chromatin, limiting DNA accessibility to the cellular machineries which require DNA as a template. Histones thereby play a central role in transcription regulation, DNA repair, DNA replication and chromosomal stability. DNA accessibility is regulated via a complex set of post-translational modifications of histones, also called histone code, and nucleosome remodeling. Also found in fat cells, its function and the presence of post-translational modifications specific to such cells are still unclear. In Homo sapiens (Human), this protein is Histone H2B type 1-A.